The sequence spans 452 residues: Adenylyltransferase and sulfurtransferase MOCS3 (452 aa).

Residues Gly-99, Asp-120, Ser-127–Arg-131, Lys-144, and Asp-188–Asn-189 contribute to the ATP site. Residues Cys-230 and Cys-233 each coordinate Zn(2+). The active-site Glycyl thioester intermediate; for adenylyltransferase activity is the Cys-247. Cys-305 and Cys-308 together coordinate Zn(2+). The Rhodanese domain maps to Lys-354–Pro-450. The active-site Cysteine persulfide intermediate; for sulfurtransferase activity is Cys-409.

In the N-terminal section; belongs to the HesA/MoeB/ThiF family. UBA4 subfamily. Zn(2+) is required as a cofactor.

It is found in the cytoplasm. Its subcellular location is the cytosol. The catalysed reaction is [molybdopterin-synthase sulfur-carrier protein]-C-terminal Gly-Gly + ATP + H(+) = [molybdopterin-synthase sulfur-carrier protein]-C-terminal Gly-Gly-AMP + diphosphate. It catalyses the reaction [molybdopterin-synthase sulfur-carrier protein]-C-terminal Gly-Gly-AMP + S-sulfanyl-L-cysteinyl-[cysteine desulfurase] + AH2 = [molybdopterin-synthase sulfur-carrier protein]-C-terminal-Gly-aminoethanethioate + L-cysteinyl-[cysteine desulfurase] + A + AMP + 2 H(+). Its pathway is tRNA modification; 5-methoxycarbonylmethyl-2-thiouridine-tRNA biosynthesis. It functions in the pathway cofactor biosynthesis; molybdopterin biosynthesis. In terms of biological role, plays a central role in 2-thiolation of mcm(5)S(2)U at tRNA wobble positions of cytosolic tRNA(Lys), tRNA(Glu) and tRNA(Gln). Also essential during biosynthesis of the molybdenum cofactor. Acts by mediating the C-terminal thiocarboxylation of sulfur carriers URM1 and MOCS2A. Its N-terminus first activates URM1 and MOCS2A as acyl-adenylates (-COAMP), then the persulfide sulfur on the catalytic cysteine is transferred to URM1 and MOCS2A to form thiocarboxylation (-COSH) of their C-terminus. The reaction probably involves hydrogen sulfide that is generated from the persulfide intermediate and that acts as a nucleophile towards URM1 and MOCS2A. Subsequently, a transient disulfide bond is formed. Does not use thiosulfate as sulfur donor; NFS1 probably acting as a sulfur donor for thiocarboxylation reactions. The sequence is that of Adenylyltransferase and sulfurtransferase MOCS3 from Drosophila virilis (Fruit fly).